We begin with the raw amino-acid sequence, 283 residues long: MKLAAPNPQALAPLPIDVVSIQSQVVYGQVGNSVAVPVFNGFGLRVAAVPTVVLSNTPHYPSMHGGAVPLDWFEGYLADLGARGALAGVRVVQLGYLGGPAQAEALGRWIAGLVAERPDLRVHIDPVIGDHDSGVYVAPGMVAAYRDHLLSLAQGLTPNGFELECLTGLPTGTMEQTIAAARTLLGGRARWVIVTSAAPATWPPGRVRVAVVTHDDAQVLEHAHVDTAPKGTGDMFGAALTGHRLAGQPVAEAARRAALQVIEALERTREAGCGELLLAGPLR.

Residues Ser23 and His59 each contribute to the substrate site. Asp125 contacts ATP. A Mg(2+)-binding site is contributed by Tyr136. ATP contacts are provided by residues Thr157, Glu162, Thr195, 222–225 (HAHV), and Thr232. Glu162 provides a ligand contact to Mg(2+). Position 234 (Asp234) interacts with substrate.

Belongs to the pyridoxine kinase family. PdxK subfamily. As to quaternary structure, homodimer. The cofactor is Mg(2+).

It carries out the reaction pyridoxal + ATP = pyridoxal 5'-phosphate + ADP + H(+). It catalyses the reaction pyridoxine + ATP = pyridoxine 5'-phosphate + ADP + H(+). The catalysed reaction is pyridoxamine + ATP = pyridoxamine 5'-phosphate + ADP + H(+). The protein operates within cofactor metabolism; pyridoxal 5'-phosphate salvage; pyridoxal 5'-phosphate from pyridoxal: step 1/1. It functions in the pathway cofactor metabolism; pyridoxal 5'-phosphate salvage; pyridoxine 5'-phosphate from pyridoxine: step 1/1. It participates in cofactor metabolism; pyridoxal 5'-phosphate salvage; pyridoxamine 5'-phosphate from pyridoxamine: step 1/1. B6-vitamer kinase involved in the salvage pathway of pyridoxal 5'-phosphate (PLP). Catalyzes the phosphorylation of pyridoxine (PN), pyridoxal (PL), and pyridoxamine (PM), forming their respective 5'-phosphorylated esters, i.e. PNP, PLP and PMP. This is Pyridoxine/pyridoxal/pyridoxamine kinase from Bordetella pertussis (strain Tohama I / ATCC BAA-589 / NCTC 13251).